Here is a 510-residue protein sequence, read N- to C-terminus: Serine carboxypeptidase 1 (510 aa).

An N-terminal signal peptide occupies residues 1–25 (MARRGRRSLASPAVAIALFVFLAYG). The propeptide occupies 26 to 36 (GGGGGGGVCEA). 3 disulfides stabilise this stretch: Cys98-Cys399, Cys262-Cys274, and Cys297-Cys366. N-linked (GlcNAc...) asparagine glycosylation occurs at Asn154. Ser194 is a catalytic residue. Residue Asn268 is glycosylated (N-linked (GlcNAc...) asparagine). Residues 303 to 362 (IKKVTPANTKLPKSFQHLGTTTKPLAVRTRMHGRAWPLRAPVRAGRVPSWQEFARGSRPS) constitute a propeptide, linker peptide. N-linked (GlcNAc...) asparagine glycosylation is present at Asn418. Catalysis depends on residues Asp434 and His487. The Microbody targeting signal signature appears at 508–510 (SKL).

Belongs to the peptidase S10 family.

The enzyme catalyses Release of a C-terminal amino acid with broad specificity.. In Oryza sativa subsp. japonica (Rice), this protein is Serine carboxypeptidase 1 (CBP1).